Reading from the N-terminus, the 284-residue chain is NAD kinase (284 aa).

D70 (proton acceptor) is an active-site residue. NAD(+) contacts are provided by residues 70-71 (DG), 139-140 (NE), K167, D169, L177, 180-185 (TAYNLS), and Q236.

The protein belongs to the NAD kinase family. A divalent metal cation serves as cofactor.

Its subcellular location is the cytoplasm. The enzyme catalyses NAD(+) + ATP = ADP + NADP(+) + H(+). Functionally, involved in the regulation of the intracellular balance of NAD and NADP, and is a key enzyme in the biosynthesis of NADP. Catalyzes specifically the phosphorylation on 2'-hydroxyl of the adenosine moiety of NAD to yield NADP. The polypeptide is NAD kinase (Helicobacter pylori (strain P12)).